The sequence spans 103 residues: Large ribosomal subunit protein uL23 (103 aa).

This sequence belongs to the universal ribosomal protein uL23 family. Part of the 50S ribosomal subunit. Contacts protein L29, and trigger factor when it is bound to the ribosome.

Its function is as follows. One of the early assembly proteins it binds 23S rRNA. One of the proteins that surrounds the polypeptide exit tunnel on the outside of the ribosome. Forms the main docking site for trigger factor binding to the ribosome. This chain is Large ribosomal subunit protein uL23, found in Chlorobium phaeovibrioides (strain DSM 265 / 1930) (Prosthecochloris vibrioformis (strain DSM 265)).